Here is a 296-residue protein sequence, read N- to C-terminus: Ribosomal protein L11 methyltransferase (296 aa).

Positions 145, 166, 188, and 230 each coordinate S-adenosyl-L-methionine.

The protein belongs to the methyltransferase superfamily. PrmA family.

It is found in the cytoplasm. The enzyme catalyses L-lysyl-[protein] + 3 S-adenosyl-L-methionine = N(6),N(6),N(6)-trimethyl-L-lysyl-[protein] + 3 S-adenosyl-L-homocysteine + 3 H(+). Functionally, methylates ribosomal protein L11. In Histophilus somni (strain 2336) (Haemophilus somnus), this protein is Ribosomal protein L11 methyltransferase.